Reading from the N-terminus, the 136-residue chain is Glutamyl-tRNA(Gln) amidotransferase subunit C, mitochondrial (136 aa).

It belongs to the GatC family. As to quaternary structure, subunit of the heterotrimeric GatCAB amidotransferase (AdT) complex, composed of A (QRSL1), B (GATB) and C (GATC) subunits.

It is found in the mitochondrion. The catalysed reaction is L-glutamyl-tRNA(Gln) + L-glutamine + ATP + H2O = L-glutaminyl-tRNA(Gln) + L-glutamate + ADP + phosphate + H(+). In terms of biological role, allows the formation of correctly charged Gln-tRNA(Gln) through the transamidation of misacylated Glu-tRNA(Gln) in the mitochondria. The reaction takes place in the presence of glutamine and ATP through an activated gamma-phospho-Glu-tRNA(Gln). The chain is Glutamyl-tRNA(Gln) amidotransferase subunit C, mitochondrial from Homo sapiens (Human).